Reading from the N-terminus, the 930-residue chain is Bifunctional uridylyltransferase/uridylyl-removing enzyme (930 aa).

The tract at residues 1 to 387 (MAPASEAGPA…IMGLFRRKKR (387 aa)) is uridylyltransferase. The uridylyl-removing stretch occupies residues 388-741 (LKPEYSLVNG…LDPDPDRDAT (354 aa)). The 123-residue stretch at 504–626 (VDEHTIQCIS…VRSKKRLDLL (123 aa)) folds into the HD domain. ACT domains are found at residues 742–818 (RACF…VVAR) and 852–927 (IIEV…GAER).

This sequence belongs to the GlnD family. Mg(2+) serves as cofactor.

It catalyses the reaction [protein-PII]-L-tyrosine + UTP = [protein-PII]-uridylyl-L-tyrosine + diphosphate. The catalysed reaction is [protein-PII]-uridylyl-L-tyrosine + H2O = [protein-PII]-L-tyrosine + UMP + H(+). With respect to regulation, uridylyltransferase (UTase) activity is inhibited by glutamine, while glutamine activates uridylyl-removing (UR) activity. Modifies, by uridylylation and deuridylylation, the PII regulatory proteins (GlnB and homologs), in response to the nitrogen status of the cell that GlnD senses through the glutamine level. Under low glutamine levels, catalyzes the conversion of the PII proteins and UTP to PII-UMP and PPi, while under higher glutamine levels, GlnD hydrolyzes PII-UMP to PII and UMP (deuridylylation). Thus, controls uridylylation state and activity of the PII proteins, and plays an important role in the regulation of nitrogen fixation and metabolism. This chain is Bifunctional uridylyltransferase/uridylyl-removing enzyme, found in Cereibacter sphaeroides (strain ATCC 17023 / DSM 158 / JCM 6121 / CCUG 31486 / LMG 2827 / NBRC 12203 / NCIMB 8253 / ATH 2.4.1.) (Rhodobacter sphaeroides).